The following is a 193-amino-acid chain: Phosphoheptose isomerase (193 aa).

The SIS domain occupies 37–193 (LADSFKAGGK…QLIEKEMVKA (157 aa)). 52–54 (NGG) serves as a coordination point for substrate. The Zn(2+) site is built by His-61 and Glu-65. Residues Glu-65, 93 to 94 (ND), 119 to 121 (STS), Ser-124, and Gln-172 contribute to the substrate site. Positions 172 and 180 each coordinate Zn(2+).

Belongs to the SIS family. GmhA subfamily. As to quaternary structure, homotetramer. Requires Zn(2+) as cofactor.

It is found in the cytoplasm. The catalysed reaction is 2 D-sedoheptulose 7-phosphate = D-glycero-alpha-D-manno-heptose 7-phosphate + D-glycero-beta-D-manno-heptose 7-phosphate. It participates in carbohydrate biosynthesis; D-glycero-D-manno-heptose 7-phosphate biosynthesis; D-glycero-alpha-D-manno-heptose 7-phosphate and D-glycero-beta-D-manno-heptose 7-phosphate from sedoheptulose 7-phosphate: step 1/1. Its pathway is bacterial outer membrane biogenesis; LPS core biosynthesis. Functionally, catalyzes the isomerization of sedoheptulose 7-phosphate in D-glycero-D-manno-heptose 7-phosphate. This chain is Phosphoheptose isomerase, found in Yersinia pestis.